A 319-amino-acid polypeptide reads, in one-letter code: Biotin synthase (319 aa).

A Radical SAM core domain is found at 44-273 (IHGDGIDLCS…EAKIRLAGGR (230 aa)). [4Fe-4S] cluster is bound by residues C62, C66, and C69. The [2Fe-2S] cluster site is built by S106, C138, C198, and R268.

The protein belongs to the radical SAM superfamily. Biotin synthase family. Homodimer. [4Fe-4S] cluster is required as a cofactor. Requires [2Fe-2S] cluster as cofactor.

The enzyme catalyses (4R,5S)-dethiobiotin + (sulfur carrier)-SH + 2 reduced [2Fe-2S]-[ferredoxin] + 2 S-adenosyl-L-methionine = (sulfur carrier)-H + biotin + 2 5'-deoxyadenosine + 2 L-methionine + 2 oxidized [2Fe-2S]-[ferredoxin]. It participates in cofactor biosynthesis; biotin biosynthesis; biotin from 7,8-diaminononanoate: step 2/2. Catalyzes the conversion of dethiobiotin (DTB) to biotin by the insertion of a sulfur atom into dethiobiotin via a radical-based mechanism. In Clostridium perfringens (strain ATCC 13124 / DSM 756 / JCM 1290 / NCIMB 6125 / NCTC 8237 / Type A), this protein is Biotin synthase.